The sequence spans 258 residues: ADP-dependent (S)-NAD(P)H-hydrate dehydratase (258 aa).

The YjeF C-terminal domain maps to 1–258 (MGRLQRTLSN…VIECIPKTIR (258 aa)). Gly201 lines the AMP pocket. Asp202 contacts (6S)-NADPHX.

It belongs to the NnrD/CARKD family. In terms of assembly, homotetramer. Mg(2+) serves as cofactor.

It carries out the reaction (6S)-NADHX + ADP = AMP + phosphate + NADH + H(+). The enzyme catalyses (6S)-NADPHX + ADP = AMP + phosphate + NADPH + H(+). Catalyzes the dehydration of the S-form of NAD(P)HX at the expense of ADP, which is converted to AMP. Together with NAD(P)HX epimerase, which catalyzes the epimerization of the S- and R-forms, the enzyme allows the repair of both epimers of NAD(P)HX, a damaged form of NAD(P)H that is a result of enzymatic or heat-dependent hydration. The sequence is that of ADP-dependent (S)-NAD(P)H-hydrate dehydratase from Natrialba magadii (strain ATCC 43099 / DSM 3394 / CCM 3739 / CIP 104546 / IAM 13178 / JCM 8861 / NBRC 102185 / NCIMB 2190 / MS3) (Natronobacterium magadii).